Here is a 94-residue protein sequence, read N- to C-terminus: Co-chaperonin GroES (94 aa).

It belongs to the GroES chaperonin family. Heptamer of 7 subunits arranged in a ring. Interacts with the chaperonin GroEL.

Its subcellular location is the cytoplasm. Functionally, together with the chaperonin GroEL, plays an essential role in assisting protein folding. The GroEL-GroES system forms a nano-cage that allows encapsulation of the non-native substrate proteins and provides a physical environment optimized to promote and accelerate protein folding. GroES binds to the apical surface of the GroEL ring, thereby capping the opening of the GroEL channel. This Ehrlichia ruminantium (strain Gardel) protein is Co-chaperonin GroES.